We begin with the raw amino-acid sequence, 377 residues long: Chorismate synthase (377 aa).

NADP(+) contacts are provided by R48 and R54. Residues 125–127, 238–239, G278, 293–297, and R319 contribute to the FMN site; these read RSS, NA, and KPTSS.

The protein belongs to the chorismate synthase family. In terms of assembly, homotetramer. The cofactor is FMNH2.

The catalysed reaction is 5-O-(1-carboxyvinyl)-3-phosphoshikimate = chorismate + phosphate. The protein operates within metabolic intermediate biosynthesis; chorismate biosynthesis; chorismate from D-erythrose 4-phosphate and phosphoenolpyruvate: step 7/7. Its function is as follows. Catalyzes the anti-1,4-elimination of the C-3 phosphate and the C-6 proR hydrogen from 5-enolpyruvylshikimate-3-phosphate (EPSP) to yield chorismate, which is the branch point compound that serves as the starting substrate for the three terminal pathways of aromatic amino acid biosynthesis. This reaction introduces a second double bond into the aromatic ring system. The protein is Chorismate synthase of Aromatoleum aromaticum (strain DSM 19018 / LMG 30748 / EbN1) (Azoarcus sp. (strain EbN1)).